A 148-amino-acid chain; its full sequence is Nickel and cobalt resistance protein CnrR (148 aa).

Residues 1–26 (MMKSRTRRLSLSTLFGALLGVSVAAA) form the signal peptide. The Periplasmic segment spans residues 28–148 (LYYSHRNEAG…LIDALRRGSQ (121 aa)). A coiled-coil region spans residues 54-117 (NEREILELKE…AAGDLQRATL (64 aa)).

The protein to A.xylosoxydans NccX.

The protein resides in the periplasm. Its function is as follows. CnrH alone is able to activate cnr expression, while both CnrY and CrnR (CnrX) are needed for nickel induction of CnrH. Has been suggested to bind nickel. This is Nickel and cobalt resistance protein CnrR (cnrR) from Cupriavidus metallidurans (strain ATCC 43123 / DSM 2839 / NBRC 102507 / CH34) (Ralstonia metallidurans).